A 360-amino-acid polypeptide reads, in one-letter code: Phospho-N-acetylmuramoyl-pentapeptide-transferase (360 aa).

10 consecutive transmembrane segments (helical) span residues 25-45, 73-93, 97-117, 135-155, 170-190, 199-219, 236-256, 263-283, 288-308, and 338-358; these read RGILGVLTALTLSLCLGPWMI, TMGGALILSSIGISTLLWADL, YVWVVLLVTFLFGAIGWVDDY, FWQSVFGLCAAIFLYTTAPSA, IPLGIGFIVLTYFVIVGSSNA, GLAIMPTVMVGGALGIFCYLS, AGELIVFSGALIGAGLGFLWF, VFMGDVGALALGAALGTMAVI, MVLFIMGGVFVMETLSVVIQV, and VIVRFWIITVILVLIGLATLK.

It belongs to the glycosyltransferase 4 family. MraY subfamily. Mg(2+) is required as a cofactor.

The protein resides in the cell inner membrane. It carries out the reaction UDP-N-acetyl-alpha-D-muramoyl-L-alanyl-gamma-D-glutamyl-meso-2,6-diaminopimeloyl-D-alanyl-D-alanine + di-trans,octa-cis-undecaprenyl phosphate = di-trans,octa-cis-undecaprenyl diphospho-N-acetyl-alpha-D-muramoyl-L-alanyl-D-glutamyl-meso-2,6-diaminopimeloyl-D-alanyl-D-alanine + UMP. It functions in the pathway cell wall biogenesis; peptidoglycan biosynthesis. Functionally, catalyzes the initial step of the lipid cycle reactions in the biosynthesis of the cell wall peptidoglycan: transfers peptidoglycan precursor phospho-MurNAc-pentapeptide from UDP-MurNAc-pentapeptide onto the lipid carrier undecaprenyl phosphate, yielding undecaprenyl-pyrophosphoryl-MurNAc-pentapeptide, known as lipid I. The sequence is that of Phospho-N-acetylmuramoyl-pentapeptide-transferase from Pseudomonas syringae pv. syringae (strain B728a).